Reading from the N-terminus, the 268-residue chain is 4-hydroxy-tetrahydrodipicolinate reductase (268 aa).

NAD(+) is bound by residues 10–15, glutamate 36, 99–101, and 123–126; these read GSTGRM, GTT, and APNM. Residue histidine 156 is the Proton donor/acceptor of the active site. Histidine 157 contributes to the (S)-2,3,4,5-tetrahydrodipicolinate binding site. The active-site Proton donor is the lysine 160. 166–167 provides a ligand contact to (S)-2,3,4,5-tetrahydrodipicolinate; the sequence is GT.

The protein belongs to the DapB family.

The protein resides in the cytoplasm. It carries out the reaction (S)-2,3,4,5-tetrahydrodipicolinate + NAD(+) + H2O = (2S,4S)-4-hydroxy-2,3,4,5-tetrahydrodipicolinate + NADH + H(+). It catalyses the reaction (S)-2,3,4,5-tetrahydrodipicolinate + NADP(+) + H2O = (2S,4S)-4-hydroxy-2,3,4,5-tetrahydrodipicolinate + NADPH + H(+). It participates in amino-acid biosynthesis; L-lysine biosynthesis via DAP pathway; (S)-tetrahydrodipicolinate from L-aspartate: step 4/4. Functionally, catalyzes the conversion of 4-hydroxy-tetrahydrodipicolinate (HTPA) to tetrahydrodipicolinate. This Nitrosomonas eutropha (strain DSM 101675 / C91 / Nm57) protein is 4-hydroxy-tetrahydrodipicolinate reductase.